Here is a 229-residue protein sequence, read N- to C-terminus: Large ribosomal subunit protein uL1 (229 aa).

It belongs to the universal ribosomal protein uL1 family. In terms of assembly, part of the 50S ribosomal subunit.

Functionally, binds directly to 23S rRNA. The L1 stalk is quite mobile in the ribosome, and is involved in E site tRNA release. In terms of biological role, protein L1 is also a translational repressor protein, it controls the translation of the L11 operon by binding to its mRNA. The chain is Large ribosomal subunit protein uL1 from Pediococcus pentosaceus (strain ATCC 25745 / CCUG 21536 / LMG 10740 / 183-1w).